The primary structure comprises 272 residues: Putative pyruvate, phosphate dikinase regulatory protein (272 aa).

ADP is bound at residue 149 to 156 (GVSRTSKT).

Belongs to the pyruvate, phosphate/water dikinase regulatory protein family. PDRP subfamily.

It carries out the reaction N(tele)-phospho-L-histidyl/L-threonyl-[pyruvate, phosphate dikinase] + ADP = N(tele)-phospho-L-histidyl/O-phospho-L-threonyl-[pyruvate, phosphate dikinase] + AMP + H(+). The catalysed reaction is N(tele)-phospho-L-histidyl/O-phospho-L-threonyl-[pyruvate, phosphate dikinase] + phosphate + H(+) = N(tele)-phospho-L-histidyl/L-threonyl-[pyruvate, phosphate dikinase] + diphosphate. Its function is as follows. Bifunctional serine/threonine kinase and phosphorylase involved in the regulation of the pyruvate, phosphate dikinase (PPDK) by catalyzing its phosphorylation/dephosphorylation. The sequence is that of Putative pyruvate, phosphate dikinase regulatory protein from Lactiplantibacillus plantarum (strain ATCC BAA-793 / NCIMB 8826 / WCFS1) (Lactobacillus plantarum).